The sequence spans 156 residues: UPF0251 protein Sfum_2819 (156 aa).

Belongs to the UPF0251 family.

The protein is UPF0251 protein Sfum_2819 of Syntrophobacter fumaroxidans (strain DSM 10017 / MPOB).